The sequence spans 482 residues: Glycogen synthase (482 aa).

Lys-20 lines the ADP-alpha-D-glucose pocket.

The protein belongs to the glycosyltransferase 1 family. Bacterial/plant glycogen synthase subfamily.

The enzyme catalyses [(1-&gt;4)-alpha-D-glucosyl](n) + ADP-alpha-D-glucose = [(1-&gt;4)-alpha-D-glucosyl](n+1) + ADP + H(+). It participates in glycan biosynthesis; glycogen biosynthesis. Synthesizes alpha-1,4-glucan chains using ADP-glucose. In Aliivibrio salmonicida (strain LFI1238) (Vibrio salmonicida (strain LFI1238)), this protein is Glycogen synthase.